Reading from the N-terminus, the 435-residue chain is Tryptophan synthase beta chain (435 aa).

The residue at position 92 (lysine 92) is an N6-(pyridoxal phosphate)lysine.

This sequence belongs to the TrpB family. Tetramer of two alpha and two beta chains. It depends on pyridoxal 5'-phosphate as a cofactor.

It carries out the reaction (1S,2R)-1-C-(indol-3-yl)glycerol 3-phosphate + L-serine = D-glyceraldehyde 3-phosphate + L-tryptophan + H2O. The protein operates within amino-acid biosynthesis; L-tryptophan biosynthesis; L-tryptophan from chorismate: step 5/5. Its function is as follows. The beta subunit is responsible for the synthesis of L-tryptophan from indole and L-serine. The sequence is that of Tryptophan synthase beta chain from Albidiferax ferrireducens (strain ATCC BAA-621 / DSM 15236 / T118) (Rhodoferax ferrireducens).